A 119-amino-acid chain; its full sequence is Ribonuclease P protein component (119 aa).

This sequence belongs to the RnpA family. As to quaternary structure, consists of a catalytic RNA component (M1 or rnpB) and a protein subunit.

It catalyses the reaction Endonucleolytic cleavage of RNA, removing 5'-extranucleotides from tRNA precursor.. In terms of biological role, RNaseP catalyzes the removal of the 5'-leader sequence from pre-tRNA to produce the mature 5'-terminus. It can also cleave other RNA substrates such as 4.5S RNA. The protein component plays an auxiliary but essential role in vivo by binding to the 5'-leader sequence and broadening the substrate specificity of the ribozyme. This chain is Ribonuclease P protein component, found in Nitrosomonas europaea (strain ATCC 19718 / CIP 103999 / KCTC 2705 / NBRC 14298).